We begin with the raw amino-acid sequence, 305 residues long: Sulfate adenylyltransferase subunit 2 (305 aa).

Belongs to the PAPS reductase family. CysD subfamily. In terms of assembly, heterodimer composed of CysD, the smaller subunit, and CysN.

It catalyses the reaction sulfate + ATP + H(+) = adenosine 5'-phosphosulfate + diphosphate. It participates in sulfur metabolism; hydrogen sulfide biosynthesis; sulfite from sulfate: step 1/3. With CysN forms the ATP sulfurylase (ATPS) that catalyzes the adenylation of sulfate producing adenosine 5'-phosphosulfate (APS) and diphosphate, the first enzymatic step in sulfur assimilation pathway. APS synthesis involves the formation of a high-energy phosphoric-sulfuric acid anhydride bond driven by GTP hydrolysis by CysN coupled to ATP hydrolysis by CysD. This Pseudomonas fluorescens (strain Pf0-1) protein is Sulfate adenylyltransferase subunit 2.